Reading from the N-terminus, the 85-residue chain is Antibacterial factor-related peptide 1 (85 aa).

A signal peptide spans 1-19 (MLYFCLLLVLLLPNNGVSS).

Expressed in the pharynx and body wall muscle.

The protein resides in the secreted. The protein is Antibacterial factor-related peptide 1 of Caenorhabditis elegans.